A 186-amino-acid polypeptide reads, in one-letter code: UPF0397 protein lp_0150 (186 aa).

The next 5 helical transmembrane spans lie at 12–32 (VVATGIGAAVIFVLMKFVAIP), 45–65 (GFLALLGAIFGPVAAGLAVFI), 76–96 (GSPWWTWVIVDGLIGVAFGLA), 112–132 (LVWFNIYQIIVNFIGWVLLAP), and 151–171 (VITWIADSISVAIIGTILLVL).

Belongs to the UPF0397 family.

Its subcellular location is the cell membrane. The chain is UPF0397 protein lp_0150 from Lactiplantibacillus plantarum (strain ATCC BAA-793 / NCIMB 8826 / WCFS1) (Lactobacillus plantarum).